The following is a 504-amino-acid chain: Glutamate--tRNA ligase (504 aa).

Residues 25–35 (PSPTGNPHVGL) carry the 'HIGH' region motif. Zn(2+)-binding residues include Cys-122, Cys-124, Cys-149, and Asp-151. Residues 270–274 (KLSKR) carry the 'KMSKS' region motif. Lys-273 is an ATP binding site.

Belongs to the class-I aminoacyl-tRNA synthetase family. Glutamate--tRNA ligase type 1 subfamily. Monomer. Requires Zn(2+) as cofactor.

Its subcellular location is the cytoplasm. The catalysed reaction is tRNA(Glu) + L-glutamate + ATP = L-glutamyl-tRNA(Glu) + AMP + diphosphate. Functionally, catalyzes the attachment of glutamate to tRNA(Glu) in a two-step reaction: glutamate is first activated by ATP to form Glu-AMP and then transferred to the acceptor end of tRNA(Glu). In Streptomyces griseus subsp. griseus (strain JCM 4626 / CBS 651.72 / NBRC 13350 / KCC S-0626 / ISP 5235), this protein is Glutamate--tRNA ligase.